A 107-amino-acid chain; its full sequence is Phosphoribosyl-ATP pyrophosphatase 1 (107 aa).

The protein belongs to the PRA-PH family.

Its subcellular location is the cytoplasm. The enzyme catalyses 1-(5-phospho-beta-D-ribosyl)-ATP + H2O = 1-(5-phospho-beta-D-ribosyl)-5'-AMP + diphosphate + H(+). Its pathway is amino-acid biosynthesis; L-histidine biosynthesis; L-histidine from 5-phospho-alpha-D-ribose 1-diphosphate: step 2/9. The chain is Phosphoribosyl-ATP pyrophosphatase 1 (hisE1) from Rhodopseudomonas palustris (strain ATCC BAA-98 / CGA009).